The primary structure comprises 134 residues: TSC22 domain family protein 3 (134 aa).

An AP1-binding region spans residues 1-60 (MNTEMYQTPMEVAVYQLHNFSISFFSSLLGGDVVSVKLDNSASGASVVALDNKIEQAMDL). Residues 76–97 (LKEQIRELVEKNSQLERENTLL) form a leucine-zipper region. A disordered region spans residues 101 to 134 (ASPEQLEKFQSRLSPEEPAPEAPETPEAPGGSAV). Phosphoserine is present on S102. At T125 the chain carries Phosphothreonine. The span at 125-134 (TPEAPGGSAV) shows a compositional bias: low complexity.

Belongs to the TSC-22/Dip/Bun family. In terms of assembly, can form homodimers, however it is likely to function as a monomer. Interacts with NFKB1. Interacts (via N-terminus) with JUN and FOS; these interactions inhibit the binding of active AP1 to its target DNA. Interacts with MYOD1. Interacts with HDAC1; this interaction affects HDAC1 activity on MYOG promoter and thus inhibits MYOD1 transcriptional activity.

It localises to the cytoplasm. The protein resides in the nucleus. In terms of biological role, protects T-cells from IL2 deprivation-induced apoptosis through the inhibition of FOXO3A transcriptional activity that leads to the down-regulation of the pro-apoptotic factor BCL2L11. In macrophages, plays a role in the anti-inflammatory and immunosuppressive effects of glucocorticoids and IL10. In T-cells, inhibits anti-CD3-induced NFKB1 nuclear translocation and thereby NFKB1 DNA-binding activities. In vitro, suppresses AP-1 transcription factor complex DNA-binding activities. In Rattus norvegicus (Rat), this protein is TSC22 domain family protein 3 (Tsc22d3).